Here is a 279-residue protein sequence, read N- to C-terminus: Shikimate dehydrogenase (NADP(+)) (279 aa).

Shikimate is bound by residues 21–23 (SMS) and Thr68. The Proton acceptor role is filled by Lys72. The shikimate site is built by Asn93 and Asp108. NADP(+) is bound by residues 130 to 134 (GAGGA) and Leu219. Residue Tyr221 coordinates shikimate. Residue Gly242 coordinates NADP(+).

It belongs to the shikimate dehydrogenase family. Homodimer.

It catalyses the reaction shikimate + NADP(+) = 3-dehydroshikimate + NADPH + H(+). The protein operates within metabolic intermediate biosynthesis; chorismate biosynthesis; chorismate from D-erythrose 4-phosphate and phosphoenolpyruvate: step 4/7. Involved in the biosynthesis of the chorismate, which leads to the biosynthesis of aromatic amino acids. Catalyzes the reversible NADPH linked reduction of 3-dehydroshikimate (DHSA) to yield shikimate (SA). In Oleidesulfovibrio alaskensis (strain ATCC BAA-1058 / DSM 17464 / G20) (Desulfovibrio alaskensis), this protein is Shikimate dehydrogenase (NADP(+)).